A 968-amino-acid polypeptide reads, in one-letter code: Phosphatidylserine decarboxylase 2 proenzyme (968 aa).

A signal peptide spans 1–25 (MAKVMRLIIFVCVALVAISVPAASS). Catalysis depends on charge relay system; for autoendoproteolytic cleavage activity residues Asp-500, His-570, and Ser-683. Ser-683 (schiff-base intermediate with substrate; via pyruvic acid; for decarboxylase activity) is an active-site residue. A Pyruvic acid (Ser); by autocatalysis modification is found at Ser-683.

It belongs to the phosphatidylserine decarboxylase family. Heterodimer of a large membrane-associated beta subunit and a small pyruvoyl-containing alpha subunit. Pyruvate is required as a cofactor. In terms of processing, is synthesized initially as an inactive proenzyme. Formation of the active enzyme involves a self-maturation process in which the active site pyruvoyl group is generated from an internal serine residue via an autocatalytic post-translational modification. Two non-identical subunits are generated from the proenzyme in this reaction, and the pyruvate is formed at the N-terminus of the alpha chain, which is derived from the carboxyl end of the proenzyme. The autoendoproteolytic cleavage occurs by a canonical serine protease mechanism, in which the side chain hydroxyl group of the serine supplies its oxygen atom to form the C-terminus of the beta chain, while the remainder of the serine residue undergoes an oxidative deamination to produce ammonia and the pyruvoyl prosthetic group on the alpha chain. During this reaction, the Ser that is part of the protease active site of the proenzyme becomes the pyruvoyl prosthetic group, which constitutes an essential element of the active site of the mature decarboxylase.

Its subcellular location is the parasitophorous vacuole. It is found in the cytoplasmic vesicle. It localises to the secretory vesicle. It catalyses the reaction a 1,2-diacyl-sn-glycero-3-phospho-L-serine + H(+) = a 1,2-diacyl-sn-glycero-3-phosphoethanolamine + CO2. It functions in the pathway phospholipid metabolism; phosphatidylethanolamine biosynthesis; phosphatidylethanolamine from CDP-diacylglycerol: step 2/2. In terms of biological role, catalyzes the formation of phosphatidylethanolamine (PtdEtn) from phosphatidylserine (PtdSer). Plays a central role in phospholipid metabolism and in the interorganelle trafficking of phosphatidylserine. Can act on liposomal and host cell PtdSer. This Toxoplasma gondii (strain ATCC 50853 / GT1) protein is Phosphatidylserine decarboxylase 2 proenzyme.